Consider the following 89-residue polypeptide: Myrmicitoxin(1)-Pr2a (89 aa).

The N-terminal stretch at 1-23 (MEIPKLLYIAVIAIGLSGSLTCA) is a signal peptide. The propeptide occupies 24–61 (TPLANPWADPEAEANPEAKAIAEATAEAIAEALAEPEP). Asn-88 bears the Asparagine amide mark.

It belongs to the formicidae venom clade 1 family. In terms of tissue distribution, expressed by the venom gland.

It localises to the secreted. Functionally, vertebrate-selective toxin that causes pain by targeting voltage-gated sodium channels. The chain is Myrmicitoxin(1)-Pr2a from Pogonomyrmex rugosus (Desert harvester ant).